A 170-amino-acid chain; its full sequence is 6,7-dimethyl-8-ribityllumazine synthase (170 aa).

Residues tryptophan 25, 57–59, and 79–81 each bind 5-amino-6-(D-ribitylamino)uracil; these read AVE and AVI. 84 to 85 lines the (2S)-2-hydroxy-3-oxobutyl phosphate pocket; the sequence is DT. The active-site Proton donor is histidine 87. Asparagine 112 serves as a coordination point for 5-amino-6-(D-ribitylamino)uracil. Position 126 (arginine 126) interacts with (2S)-2-hydroxy-3-oxobutyl phosphate.

The protein belongs to the DMRL synthase family.

The enzyme catalyses (2S)-2-hydroxy-3-oxobutyl phosphate + 5-amino-6-(D-ribitylamino)uracil = 6,7-dimethyl-8-(1-D-ribityl)lumazine + phosphate + 2 H2O + H(+). The protein operates within cofactor biosynthesis; riboflavin biosynthesis; riboflavin from 2-hydroxy-3-oxobutyl phosphate and 5-amino-6-(D-ribitylamino)uracil: step 1/2. Functionally, catalyzes the formation of 6,7-dimethyl-8-ribityllumazine by condensation of 5-amino-6-(D-ribitylamino)uracil with 3,4-dihydroxy-2-butanone 4-phosphate. This is the penultimate step in the biosynthesis of riboflavin. This Thermobifida fusca (strain YX) protein is 6,7-dimethyl-8-ribityllumazine synthase.